The primary structure comprises 78 residues: Sec-independent protein translocase protein TatA (78 aa).

Residues 1–21 form a helical membrane-spanning segment; sequence MGGISIWQLLIIAVIVVLLFG. The segment covering 47 to 59 has biased composition (basic and acidic residues); that stretch reads ESEKKDADFEPKS. Positions 47–78 are disordered; sequence ESEKKDADFEPKSLEQQSKQAATESKKDKEQA. Polar residues predominate over residues 60–69; it reads LEQQSKQAAT.

This sequence belongs to the TatA/E family. As to quaternary structure, the Tat system comprises two distinct complexes: a TatABC complex, containing multiple copies of TatA, TatB and TatC subunits, and a separate TatA complex, containing only TatA subunits. Substrates initially bind to the TatABC complex, which probably triggers association of the separate TatA complex to form the active translocon.

The protein resides in the cell inner membrane. Its function is as follows. Part of the twin-arginine translocation (Tat) system that transports large folded proteins containing a characteristic twin-arginine motif in their signal peptide across membranes. TatA could form the protein-conducting channel of the Tat system. The sequence is that of Sec-independent protein translocase protein TatA from Vibrio vulnificus (strain CMCP6).